The following is a 397-amino-acid chain: MNAGSDPVVIISAARTAIGSFNGALSTVPVHNLGTTVIKEVLQRAKVAPEEVSEVIFGHVLTAGCGQNPTRQASVGAGIPYSVPAWSCQMICGSGLKAVCLAAQSIAMGDSTIVVAGGMENMSKAPHLAHLRSGVKMGEVPLADSILCDGLTDAFHNYHMGITAENVAKKWQVSREAQDKVAVVSQNRAEHAQKAGHFDKEIVPVHVSSRKGLTEVKIDEFPRHGSNLEAMSKLKPYFLTDGTGTVTPANASGMNDGAAAVVLMKKTEAESRMLKPLAQVVSWSQAGVEPSVMGVGPIPAIKQAVAKAGWSLEDVDVFEINEAFAAVSAAIAKELGLSPEKVNIDGGAIALGHPLGASGCRILVTLLHTLERVGGTRGVAALCIGGGMGIAMCVQRG.

N-acetylmethionine is present on M1. C92 (acyl-thioester intermediate) is an active-site residue. N6-acetyllysine is present on K200. The CoA site is built by R223 and S226. An N6-acetyllysine mark is found at K233 and K235. Position 252 (S252) interacts with CoA. Residue C383 is the Proton donor/acceptor of the active site.

This sequence belongs to the thiolase-like superfamily. Thiolase family. In terms of assembly, homotetramer.

It localises to the cytoplasm. The protein resides in the cytosol. It carries out the reaction 2 acetyl-CoA = acetoacetyl-CoA + CoA. It functions in the pathway lipid metabolism; fatty acid metabolism. Its function is as follows. Involved in the biosynthetic pathway of cholesterol. This chain is Acetyl-CoA acetyltransferase, cytosolic (Acat2), found in Rattus norvegicus (Rat).